The chain runs to 252 residues: Fructose-1,6-bisphosphatase/inositol-1-monophosphatase (252 aa).

Residues Asp38, Thr40, Glu67, Asp82, Leu84, and Asp85 each coordinate Mg(2+). Residues 85 to 87 (DGT), Arg167, Ala172, and Arg191 each bind substrate. Asp200 lines the Mg(2+) pocket.

The protein belongs to the inositol monophosphatase superfamily. FBPase class 4 family. As to quaternary structure, homodimer. Mg(2+) is required as a cofactor. Mn(2+) serves as cofactor.

It catalyses the reaction beta-D-fructose 1,6-bisphosphate + H2O = beta-D-fructose 6-phosphate + phosphate. It carries out the reaction a myo-inositol phosphate + H2O = myo-inositol + phosphate. Both FBPase and IMPase activities are inhibited by Ca(2+). In contrast to mammalian I-1-P phosphatases, is only very weakly inhibited by Li(+) (with an IC(50) of about 290 mM). Functionally, phosphatase with broad specificity; it can dephosphorylate fructose 1,6-bisphosphate, both D and L isomers of inositol-1-phosphate (I-1-P), 2'-AMP, pNPP, inositol-2-phosphate, beta-glycerol phosphate, and alpha-D-glucose-1-phosphate. Cannot hydrolyze glucose-6-phosphate and fructose-6-phosphate. May be involved in the biosynthesis of a unique osmolyte, di-myo-inositol 1,1-phosphate. This chain is Fructose-1,6-bisphosphatase/inositol-1-monophosphatase (suhB), found in Archaeoglobus fulgidus (strain ATCC 49558 / DSM 4304 / JCM 9628 / NBRC 100126 / VC-16).